The chain runs to 159 residues: Protein-export protein SecB (159 aa).

It belongs to the SecB family. In terms of assembly, homotetramer, a dimer of dimers. One homotetramer interacts with 1 SecA dimer.

Its subcellular location is the cytoplasm. One of the proteins required for the normal export of preproteins out of the cell cytoplasm. It is a molecular chaperone that binds to a subset of precursor proteins, maintaining them in a translocation-competent state. It also specifically binds to its receptor SecA. This is Protein-export protein SecB from Pseudomonas fluorescens (strain ATCC BAA-477 / NRRL B-23932 / Pf-5).